A 167-amino-acid polypeptide reads, in one-letter code: Small ribosomal subunit protein uS5 (167 aa).

Residues 11-74 (LQEKLIAVNR…DKARRNMTTI (64 aa)) enclose the S5 DRBM domain.

Belongs to the universal ribosomal protein uS5 family. In terms of assembly, part of the 30S ribosomal subunit. Contacts proteins S4 and S8.

In terms of biological role, with S4 and S12 plays an important role in translational accuracy. Functionally, located at the back of the 30S subunit body where it stabilizes the conformation of the head with respect to the body. The protein is Small ribosomal subunit protein uS5 of Baumannia cicadellinicola subsp. Homalodisca coagulata.